The primary structure comprises 197 residues: dCTP deaminase, dUMP-forming (197 aa).

Residues 105–110, Asp-123, 131–133, Gln-152, Tyr-166, Lys-174, and Gln-178 each bind dCTP; these read RSSMGR and TLE. Glu-133 (proton donor/acceptor) is an active-site residue.

This sequence belongs to the dCTP deaminase family. Homotrimer.

The catalysed reaction is dCTP + 2 H2O = dUMP + NH4(+) + diphosphate. It functions in the pathway pyrimidine metabolism; dUMP biosynthesis; dUMP from dCTP: step 1/1. Bifunctional enzyme that catalyzes both the deamination of dCTP to dUTP and the hydrolysis of dUTP to dUMP without releasing the toxic dUTP intermediate. In Methanosphaera stadtmanae (strain ATCC 43021 / DSM 3091 / JCM 11832 / MCB-3), this protein is dCTP deaminase, dUMP-forming.